The following is a 340-amino-acid chain: MTPQAALQRVIEHREIFHDEMVSLMRQIMSGEVTPVMIAAIITGLRVKKETIGEIAAAASVMRELATPVKVPYDRHFVDIVGTGGDAAHTFNISSTAAFVVAAAGGKVAKHGGRSVSSSSGAADVLEALGANIMLSPEQVAACIDETGFGFMFAPNHHTAMKHVAPVRREMGVRTIFNILGPLTNPAGAPNTLMGVFHPDLVGILVRVMQRLGAERVLVVHGKDCLDEISLGAATMVGELNNGEIREYEIHPEDYGLQMQSLRNLRVGSAAESREMLLGVLGNQPGPAREIVCLNAGAALYVANVADSIGDGIVRAREAIASGAARAKLDQFINATKKFA.

5-phospho-alpha-D-ribose 1-diphosphate is bound by residues G82, G85–D86, T90, N92–S95, K110–S118, and A122. G82 serves as a coordination point for anthranilate. Residue S94 coordinates Mg(2+). R168 is an anthranilate binding site. Positions 227 and 228 each coordinate Mg(2+).

The protein belongs to the anthranilate phosphoribosyltransferase family. As to quaternary structure, homodimer. Mg(2+) serves as cofactor.

The enzyme catalyses N-(5-phospho-beta-D-ribosyl)anthranilate + diphosphate = 5-phospho-alpha-D-ribose 1-diphosphate + anthranilate. Its pathway is amino-acid biosynthesis; L-tryptophan biosynthesis; L-tryptophan from chorismate: step 2/5. In terms of biological role, catalyzes the transfer of the phosphoribosyl group of 5-phosphorylribose-1-pyrophosphate (PRPP) to anthranilate to yield N-(5'-phosphoribosyl)-anthranilate (PRA). The sequence is that of Anthranilate phosphoribosyltransferase from Dechloromonas aromatica (strain RCB).